The chain runs to 554 residues: DNA mismatch repair protein MutL (554 aa).

The protein belongs to the DNA mismatch repair MutL/HexB family.

Functionally, this protein is involved in the repair of mismatches in DNA. It is required for dam-dependent methyl-directed DNA mismatch repair. May act as a 'molecular matchmaker', a protein that promotes the formation of a stable complex between two or more DNA-binding proteins in an ATP-dependent manner without itself being part of a final effector complex. The polypeptide is DNA mismatch repair protein MutL (Crocosphaera subtropica (strain ATCC 51142 / BH68) (Cyanothece sp. (strain ATCC 51142))).